A 343-amino-acid chain; its full sequence is MAIRLTHLRKPLAYSRSFDVCIPFFRSISSFEAVEKAIKCAVETKEYLRIPELVVSLKEPYQNSTLFSFLSAFQRHHRIRVIDEILQSFVPVRPRSLPKIVYSSLLTYCLQSSDPLPLSFAILQRTLRSGCLPNPQTHLLLSDAWLERRRGSQSVADIINEMKLIGYSPDTGTCNYLVSSLCAVDKLDEAIKVVEEMSAAGCIPDVESYGAVINSLCLARKTTDVVKIVKEMVSKAGISPRKGMLTKVAAALRANREIWKAIEMIEFVESRDYPVEFESYEVVVEGCLEVREYILAGKVVMRMTDRGFIPYIKVRQKVVERLINIGEWKLACTVRQRVSELRS.

PPR repeat units lie at residues 98–133 (PKIVYSSLLTYCLQSSDPLPLSFAILQRTLRSGCLP), 134–169 (NPQTHLLLSDAWLERRRGSQSVADIINEMKLIGYSP), 170–204 (DTGTCNYLVSSLCAVDKLDEAIKVVEEMSAAGCIP), 205–240 (DVESYGAVINSLCLARKTTDVVKIVKEMVSKAGISP), 241–275 (RKGMLTKVAAALRANREIWKAIEMIEFVESRDYPV), and 276–310 (EFESYEVVVEGCLEVREYILAGKVVMRMTDRGFIP).

Belongs to the PPR family. P subfamily.

The sequence is that of Pentatricopeptide repeat-containing protein At1g06270 from Arabidopsis thaliana (Mouse-ear cress).